A 315-amino-acid polypeptide reads, in one-letter code: Taste receptor type 2 member 3 (315 aa).

The Extracellular portion of the chain corresponds to 1–5 (MGLTD). A helical membrane pass occupies residues 6–26 (GVFLIVCGAQFTLGILXNGFI). The Cytoplasmic segment spans residues 27 to 41 (GLVNGRSWFKTKRMS). The chain crosses the membrane as a helical span at residues 42–62 (LSDFIIATLALSRIILLCIIL). Over 63 to 93 (TDSFLIVFSVKEHDSGIIMQLIDVFWTFTNH) the chain is Extracellular. Residues 94-114 (LSIWFATCLGVLYCLKIASFS) form a helical membrane-spanning segment. Residues 115-127 (HPTFLWLKWRVSR) lie on the Cytoplasmic side of the membrane. The chain crosses the membrane as a helical span at residues 128–148 (VMVWMLLGALLLSCGSTASLI). Residues 149–185 (NEFKLYSVLRGIEATRNVTEHFRKKRNEYYLIHVLGT) are Extracellular-facing. A glycan (N-linked (GlcNAc...) asparagine) is linked at N165. The chain crosses the membrane as a helical span at residues 186–206 (LWYLPPLVVSLASYFLLIFSL). Residues 207–233 (GRHTRQMLQNSTSSRDPSTEAHKRAIR) lie on the Cytoplasmic side of the membrane. The chain crosses the membrane as a helical span at residues 234–254 (IILSFFFLFLLYFLAFLIASF). The Extracellular segment spans residues 255 to 265 (GNFLPETKMAK). A helical transmembrane segment spans residues 266-286 (MIGEVMTMFYPAGHSFIVILG). Residues 287–315 (NSKLKQTFVEMLRCESGHLKPGSKGPIFS) lie on the Cytoplasmic side of the membrane.

The protein belongs to the G-protein coupled receptor T2R family.

The protein localises to the membrane. Its function is as follows. Gustducin-coupled receptor implicated in the perception of bitter compounds in the oral cavity and the gastrointestinal tract. Signals through PLCB2 and the calcium-regulated cation channel TRPM5. The chain is Taste receptor type 2 member 3 (TAS2R3) from Papio hamadryas (Hamadryas baboon).